The following is a 76-amino-acid chain: UPF0291 protein BT9727_1737 (76 aa).

The protein belongs to the UPF0291 family.

It is found in the cytoplasm. This chain is UPF0291 protein BT9727_1737, found in Bacillus thuringiensis subsp. konkukian (strain 97-27).